The following is a 427-amino-acid chain: Phosphatidylinositol 4-phosphate 5-kinase 10 (427 aa).

The region spanning 1–419 (MFTREITAKD…RFQDFVSQIF (419 aa)) is the PIPK domain. Disordered stretches follow at residues 247-287 (SRGS…DSEN) and 334-355 (MKIP…VGKQ). The tract at residues 379 to 400 (YGVRKRLEHCYKSIQHSSKTIS) is activation loop.

It catalyses the reaction a 1,2-diacyl-sn-glycero-3-phospho-(1D-myo-inositol 4-phosphate) + ATP = a 1,2-diacyl-sn-glycero-3-phospho-(1D-myo-inositol-4,5-bisphosphate) + ADP + H(+). The polypeptide is Phosphatidylinositol 4-phosphate 5-kinase 10 (PIP5K10) (Arabidopsis thaliana (Mouse-ear cress)).